We begin with the raw amino-acid sequence, 1168 residues long: DNA-directed RNA polymerase subunit beta (1168 aa).

It belongs to the RNA polymerase beta chain family. As to quaternary structure, the RNAP catalytic core consists of 2 alpha, 1 beta, 1 beta' and 1 omega subunit. When a sigma factor is associated with the core the holoenzyme is formed, which can initiate transcription.

The catalysed reaction is RNA(n) + a ribonucleoside 5'-triphosphate = RNA(n+1) + diphosphate. Its function is as follows. DNA-dependent RNA polymerase catalyzes the transcription of DNA into RNA using the four ribonucleoside triphosphates as substrates. This Rhodococcus jostii (strain RHA1) protein is DNA-directed RNA polymerase subunit beta.